A 289-amino-acid polypeptide reads, in one-letter code: Diaminopimelate epimerase (289 aa).

Substrate is bound by residues N11 and N78. C87 functions as the Proton donor in the catalytic mechanism. Substrate-binding positions include 88–89 (GN), N163, N199, and 217–218 (ER). The active-site Proton acceptor is the C226. 227-228 (GT) serves as a coordination point for substrate.

Belongs to the diaminopimelate epimerase family. As to quaternary structure, homodimer.

The protein resides in the cytoplasm. The enzyme catalyses (2S,6S)-2,6-diaminopimelate = meso-2,6-diaminopimelate. The protein operates within amino-acid biosynthesis; L-lysine biosynthesis via DAP pathway; DL-2,6-diaminopimelate from LL-2,6-diaminopimelate: step 1/1. In terms of biological role, catalyzes the stereoinversion of LL-2,6-diaminopimelate (L,L-DAP) to meso-diaminopimelate (meso-DAP), a precursor of L-lysine and an essential component of the bacterial peptidoglycan. In Rhodococcus opacus (strain B4), this protein is Diaminopimelate epimerase.